The chain runs to 261 residues: Glutamate racemase (261 aa).

Residues 9–10 and 41–42 contribute to the substrate site; these read DS and YG. Residue cysteine 73 is the Proton donor/acceptor of the active site. A substrate-binding site is contributed by 74–75; it reads NT. The Proton donor/acceptor role is filled by cysteine 179. Substrate is bound at residue 180-181; sequence TH.

The protein belongs to the aspartate/glutamate racemases family.

The enzyme catalyses L-glutamate = D-glutamate. It functions in the pathway cell wall biogenesis; peptidoglycan biosynthesis. In terms of biological role, provides the (R)-glutamate required for cell wall biosynthesis. This Aliivibrio fischeri (strain MJ11) (Vibrio fischeri) protein is Glutamate racemase.